We begin with the raw amino-acid sequence, 257 residues long: Uridylate kinase (257 aa).

8–11 (KLSG) contributes to the ATP binding site. Positions 21-26 (GSAGFG) are involved in allosteric activation by GTP. Glycine 56 provides a ligand contact to UMP. ATP is bound by residues glycine 57 and arginine 61. UMP is bound by residues aspartate 75 and 136 to 143 (NGAPFFTT). Asparagine 164, tyrosine 170, and aspartate 173 together coordinate ATP.

The protein belongs to the UMP kinase family. Homohexamer.

Its subcellular location is the cytoplasm. The enzyme catalyses UMP + ATP = UDP + ADP. It participates in pyrimidine metabolism; CTP biosynthesis via de novo pathway; UDP from UMP (UMPK route): step 1/1. Its activity is regulated as follows. Allosterically activated by GTP. Inhibited by UTP. Functionally, catalyzes the reversible phosphorylation of UMP to UDP. The polypeptide is Uridylate kinase (Deinococcus geothermalis (strain DSM 11300 / CIP 105573 / AG-3a)).